The sequence spans 522 residues: Ribose import ATP-binding protein RbsA 1 (522 aa).

ABC transporter domains follow at residues 8–243 (LRIE…GRSI) and 249–496 (RERP…VSTN). ATP is bound at residue 40–47 (GENGAGKS). The tract at residues 492–522 (AVSTNQYKPDKSDKPDASAGKTDQKEAPRGH) is disordered. Positions 499-522 (KPDKSDKPDASAGKTDQKEAPRGH) are enriched in basic and acidic residues.

Belongs to the ABC transporter superfamily. Ribose importer (TC 3.A.1.2.1) family. The complex is composed of an ATP-binding protein (RbsA), two transmembrane proteins (RbsC) and a solute-binding protein (RbsB).

It is found in the cell membrane. The enzyme catalyses D-ribose(out) + ATP + H2O = D-ribose(in) + ADP + phosphate + H(+). Part of the ABC transporter complex RbsABC involved in ribose import. Responsible for energy coupling to the transport system. The chain is Ribose import ATP-binding protein RbsA 1 from Streptomyces avermitilis (strain ATCC 31267 / DSM 46492 / JCM 5070 / NBRC 14893 / NCIMB 12804 / NRRL 8165 / MA-4680).